The sequence spans 267 residues: 3-methyl-2-oxobutanoate hydroxymethyltransferase (267 aa).

Residues Asp45 and Asp84 each coordinate Mg(2+). 3-methyl-2-oxobutanoate contacts are provided by residues 45–46 (DS), Asp84, and Lys113. A Mg(2+)-binding site is contributed by Glu115. Glu182 acts as the Proton acceptor in catalysis.

The protein belongs to the PanB family. Homodecamer; pentamer of dimers. Requires Mg(2+) as cofactor.

It is found in the cytoplasm. The enzyme catalyses 3-methyl-2-oxobutanoate + (6R)-5,10-methylene-5,6,7,8-tetrahydrofolate + H2O = 2-dehydropantoate + (6S)-5,6,7,8-tetrahydrofolate. It functions in the pathway cofactor biosynthesis; coenzyme A biosynthesis. Functionally, catalyzes the reversible reaction in which hydroxymethyl group from 5,10-methylenetetrahydrofolate is transferred onto alpha-ketoisovalerate to form ketopantoate. The protein is 3-methyl-2-oxobutanoate hydroxymethyltransferase of Saccharolobus islandicus (strain M.16.27) (Sulfolobus islandicus).